The primary structure comprises 252 residues: Putative endonuclease C1F12.06c (252 aa).

Mg(2+)-binding residues include Asp-43 and Asp-114.

It belongs to the endonuclease V family.

The protein resides in the cytoplasm. Its subcellular location is the nucleus. The protein is Putative endonuclease C1F12.06c of Schizosaccharomyces pombe (strain 972 / ATCC 24843) (Fission yeast).